A 357-amino-acid polypeptide reads, in one-letter code: Isopenicillin-N N-acyltransferase (357 aa).

6-aminopenicillanate contacts are provided by Asp-121 and Arg-310.

Belongs to the peptidase C45 family. The active form of the enzyme results from processing of the 40-kDa monomeric precursor to a heterodimer containing subunits of 11 and 29 kDa. In terms of processing, the pre-AAT protein is synthesized as 40 kDa precursor which is then self-processed into an 11 kDa (protein A) and a 29 kDa (protein B). The B protein carries AAT activity.

The protein resides in the peroxisome matrix. The enzyme catalyses isopenicillin N + phenylacetyl-CoA + H2O = penicillin G + L-2-aminoadipate + CoA + H(+). It functions in the pathway antibiotic biosynthesis; penicillin G biosynthesis; penicillin G from L-alpha-aminoadipate and L-cysteine and L-valine: step 3/3. Isopenicillin-N N-acyltransferase; part of the gene cluster that mediates the biosynthesis of penicillin, the world's most important antibiotic. AatA catalyzes the exchange of the alpha-aminoadipyl side chain of isopenicillin N for phenylacetic acid to yield penicillin. This step occurs in the peroxisomal matrix and the penM and paaT transporters are involved in the isopenicillin N and phenylacetic acid import into the peroxisome, respectively. The penicillin biosynthesis occurs via 3 enzymatic steps, the first corresponding to the production of the tripeptide N-[(5S)-5-amino-5-carboxypentanoyl]-L-cysteinyl-D-valine (LLD-ACV or ACV) by the NRPS acvA. The tripeptide ACV is then cyclized to isopenicillin N (IPN) by the isopenicillin N synthase ipnA that forms the beta-lactam nucleus. Finally, the alpha-aminoadipyl side chain is exchanged for phenylacetic acid by the isopenicillin N acyltransferase aatA to yield penicillin in the peroxisomal matrix. This Penicillium chrysogenum (Penicillium notatum) protein is Isopenicillin-N N-acyltransferase.